Consider the following 466-residue polypeptide: 3-isopropylmalate dehydratase large subunit (466 aa).

The [4Fe-4S] cluster site is built by Cys-347, Cys-407, and Cys-410.

The protein belongs to the aconitase/IPM isomerase family. LeuC type 1 subfamily. As to quaternary structure, heterodimer of LeuC and LeuD. Requires [4Fe-4S] cluster as cofactor.

It carries out the reaction (2R,3S)-3-isopropylmalate = (2S)-2-isopropylmalate. Its pathway is amino-acid biosynthesis; L-leucine biosynthesis; L-leucine from 3-methyl-2-oxobutanoate: step 2/4. Functionally, catalyzes the isomerization between 2-isopropylmalate and 3-isopropylmalate, via the formation of 2-isopropylmaleate. The chain is 3-isopropylmalate dehydratase large subunit from Shewanella woodyi (strain ATCC 51908 / MS32).